We begin with the raw amino-acid sequence, 355 residues long: Phytoene synthase (355 aa).

This sequence belongs to the phytoene/squalene synthase family. It depends on ATP as a cofactor. Requires Mn(2+) as cofactor. Mg(2+) is required as a cofactor.

The protein operates within carotenoid biosynthesis; phytoene biosynthesis. Involved in the biosynthesis of carotenoids. Catalyzes the condensation of two molecules of geranylgeranyl diphosphate (GGPP) to give prephytoene diphosphate (PPPP) and the subsequent rearrangement of the cyclopropylcarbinyl intermediate to yield phytoene. The chain is Phytoene synthase (crtB) from Cereibacter sphaeroides (strain ATCC 17023 / DSM 158 / JCM 6121 / CCUG 31486 / LMG 2827 / NBRC 12203 / NCIMB 8253 / ATH 2.4.1.) (Rhodobacter sphaeroides).